Consider the following 185-residue polypeptide: MINEIKKDAQTRMQKSLESLTHAFTRIRTGKAHPSILGGVMVPYYGADTPLSQVANVTVKDSRTLQVVAFERNMLAAVDKAIQSSGLGFNPTNLGELLLISMPALTEETRKGFTKQARDAAEDARVAVRNIRRDALSQLKDLVKDKEISEDEERRAADDVQKLTDKFVADIEVAVKQKEADLMAV.

This sequence belongs to the RRF family.

It is found in the cytoplasm. Its function is as follows. Responsible for the release of ribosomes from messenger RNA at the termination of protein biosynthesis. May increase the efficiency of translation by recycling ribosomes from one round of translation to another. This is Ribosome-recycling factor from Pseudomonas syringae pv. tomato (strain ATCC BAA-871 / DC3000).